The primary structure comprises 782 residues: Protein NEDD1 (782 aa).

WD repeat units lie at residues 1 to 34 (MMSN…GDPC), 41 to 80 (SPGC…LGTV), 90 to 130 (SAEE…CIKK), 133 to 172 (GHTS…RATE), 176 to 216 (PNGQ…PKMS), 220 to 260 (QHSA…SSSC), 262 to 301 (AYEA…QPVT), and 307 to 358 (SNSE…TPSA). Disordered regions lie at residues 350–393 (PLPS…WPSG) and 467–512 (PIFD…EAWG). Composition is skewed to polar residues over residues 352–362 (PSTTPSASQSA), 370–386 (VSAS…TPNR), and 488–498 (SFGSITPTASS). The stretch at 753 to 782 (VLSSILENQAEQMKELKLLRKENQELRQRL) forms a coiled coil.

Expressed in root meristematic cells.

The protein localises to the nucleus envelope. Its subcellular location is the chromosome. It localises to the centromere. It is found in the kinetochore. The protein resides in the cytoplasm. The protein localises to the cytoskeleton. Its subcellular location is the phragmoplast. It localises to the microtubule organizing center. Its function is as follows. Regulates microtubules organization in a centrosome-independent manner. Required for the spindle to be positioned correctly and for the function of gamma-tubulin in organizing phragmoplast microtubules. Component of active gamma-tubulin ring complexes (gamma-TuRCs) associated with cortical microtubules in interphase cells. Mediates gamma-TuRC recruitment to the nucleation sites and is important for determining the ratio of branched to parallel nucleation. May mediate the localization of GCP2 and GCP3 to the nuclear envelope. The polypeptide is Protein NEDD1 (Arabidopsis thaliana (Mouse-ear cress)).